The primary structure comprises 333 residues: Phenylalanine--tRNA ligase alpha subunit (333 aa).

E254 serves as a coordination point for Mg(2+).

The protein belongs to the class-II aminoacyl-tRNA synthetase family. Phe-tRNA synthetase alpha subunit type 1 subfamily. Tetramer of two alpha and two beta subunits. Mg(2+) is required as a cofactor.

Its subcellular location is the cytoplasm. It carries out the reaction tRNA(Phe) + L-phenylalanine + ATP = L-phenylalanyl-tRNA(Phe) + AMP + diphosphate + H(+). This chain is Phenylalanine--tRNA ligase alpha subunit, found in Xylella fastidiosa (strain M12).